The sequence spans 721 residues: uncharacterized protein (721 aa).

Disordered regions lie at residues 196–291 and 370–513; these read TSMT…VGGP and AGIP…AAEQ. Composition is skewed to low complexity over residues 202 to 224 and 232 to 250; these read SPAGSPFGAAPSAPSHSTTTSGP and SPFGTAPMVLSSSSTSSGP. Composition is skewed to pro residues over residues 264–283 and 379–389; these read PMPPGPPPPGTVSPPLPPSA and APTPSPAPIAP. The span at 419 to 429 shows a compositional bias: low complexity; it reads APAGPLPAYGA. The segment covering 435–446 has biased composition (pro residues); it reads VTTPPATPPTPT. The segment covering 470–484 has biased composition (polar residues); that stretch reads VNKSTAPATTQAQPS. Residues 491–505 show a composition bias toward low complexity; the sequence is ASATAAATTGAAAGD.

This is an uncharacterized protein from Mycobacterium tuberculosis (strain ATCC 25618 / H37Rv).